A 156-amino-acid chain; its full sequence is Transcription elongation factor GreA (156 aa).

Residues Glu44–Gln67 are a coiled coil.

It belongs to the GreA/GreB family.

In terms of biological role, necessary for efficient RNA polymerase transcription elongation past template-encoded arresting sites. The arresting sites in DNA have the property of trapping a certain fraction of elongating RNA polymerases that pass through, resulting in locked ternary complexes. Cleavage of the nascent transcript by cleavage factors such as GreA or GreB allows the resumption of elongation from the new 3'terminus. GreA releases sequences of 2 to 3 nucleotides. The sequence is that of Transcription elongation factor GreA from Syntrophobacter fumaroxidans (strain DSM 10017 / MPOB).